The following is a 290-amino-acid chain: 4-hydroxy-tetrahydrodipicolinate synthase (290 aa).

Thr-46 is a binding site for pyruvate. Residue Tyr-134 is the Proton donor/acceptor of the active site. Lys-163 acts as the Schiff-base intermediate with substrate in catalysis. Val-205 serves as a coordination point for pyruvate.

This sequence belongs to the DapA family. Homotetramer; dimer of dimers.

It localises to the cytoplasm. It carries out the reaction L-aspartate 4-semialdehyde + pyruvate = (2S,4S)-4-hydroxy-2,3,4,5-tetrahydrodipicolinate + H2O + H(+). It functions in the pathway amino-acid biosynthesis; L-lysine biosynthesis via DAP pathway; (S)-tetrahydrodipicolinate from L-aspartate: step 3/4. Catalyzes the condensation of (S)-aspartate-beta-semialdehyde [(S)-ASA] and pyruvate to 4-hydroxy-tetrahydrodipicolinate (HTPA). This is 4-hydroxy-tetrahydrodipicolinate synthase from Bacillus subtilis (strain 168).